Reading from the N-terminus, the 430-residue chain is T-kininogen 2 (430 aa).

A signal peptide spans 1 to 18 (MKLITILLLCSRLLPSLA). Gln19 carries the pyrrolidone carboxylic acid modification. The 104-residue stretch at 28–131 (CNDETVFQAV…TQICNITPGK (104 aa)) folds into the Cystatin kininogen-type 1 domain. Disulfide bonds link Cys28-Cys404, Cys83-Cys94, Cys107-Cys125, Cys141-Cys144, Cys205-Cys217, Cys228-Cys247, Cys263-Cys266, Cys327-Cys339, and Cys350-Cys369. Asn82 carries N-linked (GlcNAc...) asparagine glycosylation. The region spanning 150 to 253 (MDSSDLKPVL…SQSCDLYPGD (104 aa)) is the Cystatin kininogen-type 2 domain. Asn168 and Asn204 each carry an N-linked (GlcNAc...) asparagine glycan. The region spanning 272–375 (VDSPELKEAL…TVRCQALDMM (104 aa)) is the Cystatin kininogen-type 3 domain. A glycan (N-linked (GlcNAc...) asparagine) is linked at Asn326. A disordered region spans residues 410 to 430 (LSKAGAGPAPDHQAEASTVTP).

Post-translationally, as T-kinin is preceded by a Met instead of an Arg or Lys, it is not released from its precursor by either tissue or plasma kallikrein. Plasma.

The protein resides in the secreted. It localises to the extracellular space. Its function is as follows. Kininogens are plasma glycoproteins with a number of functions: (1) as precursor of the active peptide bradykinin they effect smooth muscle contraction, induction of hypotension and increase of vascular permeability. (2) They play a role in blood coagulation by helping to position optimally prekallikrein and factor XI next to factor XII. (3) They are inhibitor of thiol proteases. The protein is T-kininogen 2 of Rattus norvegicus (Rat).